The following is a 645-amino-acid chain: DNA ligase (645 aa).

NAD(+)-binding positions include 30–34 (DAEFD) and 72–73 (SQ). Lysine 99 acts as the N6-AMP-lysine intermediate in catalysis. Positions 120, 163, 275, and 296 each coordinate NAD(+). The Zn(2+) site is built by cysteine 387, cysteine 390, cysteine 403, and cysteine 408. One can recognise a BRCT domain in the interval 564–645 (EEGAVLKGLS…EAFLNLIGKV (82 aa)).

It belongs to the NAD-dependent DNA ligase family. LigA subfamily. The cofactor is Mg(2+). Requires Mn(2+) as cofactor.

The enzyme catalyses NAD(+) + (deoxyribonucleotide)n-3'-hydroxyl + 5'-phospho-(deoxyribonucleotide)m = (deoxyribonucleotide)n+m + AMP + beta-nicotinamide D-nucleotide.. In terms of biological role, DNA ligase that catalyzes the formation of phosphodiester linkages between 5'-phosphoryl and 3'-hydroxyl groups in double-stranded DNA using NAD as a coenzyme and as the energy source for the reaction. It is essential for DNA replication and repair of damaged DNA. This chain is DNA ligase, found in Treponema denticola (strain ATCC 35405 / DSM 14222 / CIP 103919 / JCM 8153 / KCTC 15104).